Consider the following 124-residue polypeptide: UPF0292 protein AF_0905 (124 aa).

In terms of domain architecture, Toprim spans 21 to 98 (GWVVVVEGKK…IPDVEIKRKI (78 aa)). Positions 27, 67, and 69 each coordinate Mg(2+).

Belongs to the UPF0292 family. The cofactor is Mg(2+).

The chain is UPF0292 protein AF_0905 from Archaeoglobus fulgidus (strain ATCC 49558 / DSM 4304 / JCM 9628 / NBRC 100126 / VC-16).